The following is a 371-amino-acid chain: MSVNIKIENAQKRYGDNIIIENLSLDIKQGEFFTLLGPSGCGKTTLLRMIAGFNSIEKGNFYFNEKRINDLDPAKRNIGMVFQNYAIFPHLTVEQNVEFGLKNRKVSKEEMKIEIDKFLKLMQIDEYKDRMPERLSGGQQQRVALARALVIKPDVLLMDEPLSNLDAKLRVEMRTAIKEIQNSIGITTVYVTHDQEEAMAVSDRIAVMKDGEIQHLGQPKDIYQRPANLFVATFIGKTNVLKGNLNGSILKVAGKYEVSLNNIKDKNIKGNVVISIRPEEFVIDENQTKDGMRAFIDSSVFLGLNTHYFAHLESGEKIEIVQESKIDSIIPKGAEVYLKVKQDKINVFTEDGSRNILEGVNNDAIGVAYVK.

An ABC transporter domain is found at 5-235 (IKIENAQKRY…PANLFVATFI (231 aa)). 37–44 (GPSGCGKT) contacts ATP.

This sequence belongs to the ABC transporter superfamily. Fe(3+) ion importer (TC 3.A.1.10) family. In terms of assembly, the complex is composed of two ATP-binding proteins (FbpC), two transmembrane proteins (FbpB) and a solute-binding protein (FbpA).

Its subcellular location is the cell inner membrane. The catalysed reaction is Fe(3+)(out) + ATP + H2O = Fe(3+)(in) + ADP + phosphate + H(+). Its function is as follows. Part of the ABC transporter complex FbpABC involved in Fe(3+) ions import. Responsible for energy coupling to the transport system. This Fusobacterium nucleatum subsp. nucleatum (strain ATCC 25586 / DSM 15643 / BCRC 10681 / CIP 101130 / JCM 8532 / KCTC 2640 / LMG 13131 / VPI 4355) protein is Fe(3+) ions import ATP-binding protein FbpC.